Consider the following 655-residue polypeptide: FYVE, RhoGEF and PH domain-containing protein 2 (655 aa).

Phosphoserine occurs at positions 11 and 48. Residues 18–64 (VFENSRTPEAAPRGQRLEDVHHRPECRPPESPGPREKTNVGEAVGSE) are disordered. Basic and acidic residues predominate over residues 32–56 (QRLEDVHHRPECRPPESPGPREKTN). In terms of domain architecture, DH spans 102–290 (PEKKIVQELL…FSAAQHSNAA (189 aa)). Positions 319-418 (TLLREGPVLK…WMQAFQAAID (100 aa)) constitute a PH 1 domain. Residues 458–518 (DKMVTMCMRC…VCLHCYAFLT (61 aa)) form an FYVE-type zinc finger. Zn(2+) contacts are provided by cysteine 464, cysteine 467, cysteine 481, cysteine 484, cysteine 489, cysteine 492, cysteine 510, and cysteine 513. A PH 2 domain is found at 544–641 (QSLMCSFLQL…WVKAMERAAS (98 aa)). Serine 654 carries the phosphoserine modification.

The protein resides in the cytoplasm. The protein localises to the cytoskeleton. It is found in the nucleus. It localises to the early endosome. Its subcellular location is the early endosome membrane. The protein resides in the cell projection. The protein localises to the ruffle membrane. Its function is as follows. Activates CDC42, a member of the Ras-like family of Rho- and Rac proteins, by exchanging bound GDP for free GTP. Activates JNK1 via CDC42 but not RAC1. Binds to phosphatidylinositol 4,5-bisphosphate, phosphatidylinositol 3,4,5-trisphosphate, phosphatidylinositol 5-monophosphate, phosphatidylinositol 4-monophosphate and phosphatidylinositol 3-monophosphate. In Homo sapiens (Human), this protein is FYVE, RhoGEF and PH domain-containing protein 2 (FGD2).